The sequence spans 392 residues: Formate-dependent phosphoribosylglycinamide formyltransferase (392 aa).

N(1)-(5-phospho-beta-D-ribosyl)glycinamide is bound by residues 20–21 and Glu-80; that span reads EL. ATP contacts are provided by residues Arg-112, Lys-153, 158–163, 193–196, and Glu-201; these read SSGKGQ and EEFI. An ATP-grasp domain is found at 117–306; it reads RLAAEELGLP…EFELHVRAIL (190 aa). 2 residues coordinate Mg(2+): Glu-265 and Glu-277. N(1)-(5-phospho-beta-D-ribosyl)glycinamide-binding positions include Asp-284, Lys-354, and 361–362; that span reads RR.

Belongs to the PurK/PurT family. As to quaternary structure, homodimer.

It catalyses the reaction N(1)-(5-phospho-beta-D-ribosyl)glycinamide + formate + ATP = N(2)-formyl-N(1)-(5-phospho-beta-D-ribosyl)glycinamide + ADP + phosphate + H(+). It functions in the pathway purine metabolism; IMP biosynthesis via de novo pathway; N(2)-formyl-N(1)-(5-phospho-D-ribosyl)glycinamide from N(1)-(5-phospho-D-ribosyl)glycinamide (formate route): step 1/1. Involved in the de novo purine biosynthesis. Catalyzes the transfer of formate to 5-phospho-ribosyl-glycinamide (GAR), producing 5-phospho-ribosyl-N-formylglycinamide (FGAR). Formate is provided by PurU via hydrolysis of 10-formyl-tetrahydrofolate. The sequence is that of Formate-dependent phosphoribosylglycinamide formyltransferase from Geobacter metallireducens (strain ATCC 53774 / DSM 7210 / GS-15).